Here is a 226-residue protein sequence, read N- to C-terminus: MYHIELKKEALLPRERLVDLGADRLSNQELLAILLRTGIKEKPVLEISTQILENISSLADFGQLSLQELQSIKGIGQVKSVEIKAMLELAKRIHKAEYDRKEQILSSEQLARKMMLELGDKKQEHLVAIYMDTQNRIIEQRTIFIGTVRRSVAEPREILHYACKNMATSLIIIHNHPSGSPKPSESDLSFTKKIKRSCDHLGIVCLDHIIVGKNKYYSFREEADIL.

The 123-residue stretch at 103–225 (QILSSEQLAR…YYSFREEADI (123 aa)) folds into the MPN domain. Zn(2+) contacts are provided by H174, H176, and D187. A JAMM motif motif is present at residues 174–187 (HNHPSGSPKPSESD).

It belongs to the UPF0758 family.

The chain is UPF0758 protein SAK_1186 from Streptococcus agalactiae serotype Ia (strain ATCC 27591 / A909 / CDC SS700).